The sequence spans 403 residues: MGALTIVAKYMIVAQIEVNGSVDKSDIIGALFSQTEGLLGKDMDLRELQMMGRIGRIEVDIFEKNSKTKAKIYIPSNLDRYETALVAALIESIERVGPYLANIKVLEIKDLREEKRRRIIEKAKELVKMIEEEILPDTKEIIEKLKEDVAKAEIVEYGPEKLPAGPDVEKSDSVIIVEGRADVVNLVKHGYRNVIAIEGISRGIPQTVIDLSKKKSVTVFIDGDKGGELVLRELLKVAHIDYIARAPPGKEVEQLTAKEIAKALRNKVTLEEWLAQQKAAGEKTEAPAQPTQQQPPPAEAPIQFPFDMSKKVEEMLGTLEAEIYDANWGLVKKLPVRELPDFLTGEGDSFYAIVMDGIVTQRIVDLAAKKGVKVIVTARVGPLTKVPEDMKIITFEKLTQKVA.

Residues 172–248 (DSVIIVEGRA…HIDYIARAPP (77 aa)) form the Toprim domain. Positions 178, 222, and 224 each coordinate Mg(2+). Residues 279 to 300 (AAGEKTEAPAQPTQQQPPPAEA) form a disordered region.

The protein belongs to the archaeal DnaG primase family. In terms of assembly, forms a ternary complex with MCM helicase and DNA. Component of the archaeal exosome complex. It depends on Mg(2+) as a cofactor.

The catalysed reaction is ssDNA + n NTP = ssDNA/pppN(pN)n-1 hybrid + (n-1) diphosphate.. In terms of biological role, RNA polymerase that catalyzes the synthesis of short RNA molecules used as primers for DNA polymerase during DNA replication. Also part of the exosome, which is a complex involved in RNA degradation. Acts as a poly(A)-binding protein that enhances the interaction between heteromeric, adenine-rich transcripts and the exosome. The sequence is that of DNA primase DnaG from Pyrobaculum neutrophilum (strain DSM 2338 / JCM 9278 / NBRC 100436 / V24Sta) (Thermoproteus neutrophilus).